The following is a 134-amino-acid chain: Phosphomevalonate dehydratase small subunit (134 aa).

The Proton acceptor role is filled by serine 62.

It belongs to the AcnX type II small subunit family. As to quaternary structure, heterodimer composed of a large subunit (PMDh-L) and a small subunit (PMDh-S).

It catalyses the reaction (R)-5-phosphomevalonate = (2E)-3-methyl-5-phosphooxypent-2-enoate + H2O. The protein operates within isoprenoid biosynthesis; isopentenyl diphosphate biosynthesis via mevalonate pathway. Component of a hydro-lyase that catalyzes the dehydration of mevalonate 5-phosphate (MVA5P) to form trans-anhydromevalonate 5-phosphate (tAHMP). Involved in the archaeal mevalonate (MVA) pathway, which provides fundamental precursors for isoprenoid biosynthesis, such as isopentenyl diphosphate (IPP) and dimethylallyl diphosphate (DMAPP). The protein is Phosphomevalonate dehydratase small subunit of Pyrococcus furiosus (strain ATCC 43587 / DSM 3638 / JCM 8422 / Vc1).